The primary structure comprises 127 residues: Small ribosomal subunit protein uS12m (127 aa).

Belongs to the universal ribosomal protein uS12 family.

The protein localises to the mitochondrion. In Acanthamoeba castellanii (Amoeba), this protein is Small ribosomal subunit protein uS12m (RPS12).